A 159-amino-acid chain; its full sequence is NAD(P)H-quinone oxidoreductase subunit J, chloroplastic (159 aa).

It belongs to the complex I 30 kDa subunit family. NDH is composed of at least 16 different subunits, 5 of which are encoded in the nucleus.

The protein resides in the plastid. It is found in the chloroplast thylakoid membrane. The catalysed reaction is a plastoquinone + NADH + (n+1) H(+)(in) = a plastoquinol + NAD(+) + n H(+)(out). It carries out the reaction a plastoquinone + NADPH + (n+1) H(+)(in) = a plastoquinol + NADP(+) + n H(+)(out). Functionally, NDH shuttles electrons from NAD(P)H:plastoquinone, via FMN and iron-sulfur (Fe-S) centers, to quinones in the photosynthetic chain and possibly in a chloroplast respiratory chain. The immediate electron acceptor for the enzyme in this species is believed to be plastoquinone. Couples the redox reaction to proton translocation, and thus conserves the redox energy in a proton gradient. This is NAD(P)H-quinone oxidoreductase subunit J, chloroplastic from Oryza nivara (Indian wild rice).